A 341-amino-acid polypeptide reads, in one-letter code: Large ribosomal subunit protein uL10 (341 aa).

The segment at 301-341 is disordered; sequence EAAPAAAPAAEEKAEEEKKEEEEEKKEDQELSGLDSIFGGF.

Belongs to the universal ribosomal protein uL10 family. Part of the 50S ribosomal subunit. Forms part of the ribosomal stalk which helps the ribosome interact with GTP-bound translation factors. Forms a heptameric L10(L12)2(L12)2(L12)2 complex, where L10 forms an elongated spine to which the L12 dimers bind in a sequential fashion.

In terms of biological role, forms part of the ribosomal stalk, playing a central role in the interaction of the ribosome with GTP-bound translation factors. In Aeropyrum pernix (strain ATCC 700893 / DSM 11879 / JCM 9820 / NBRC 100138 / K1), this protein is Large ribosomal subunit protein uL10.